Here is a 341-residue protein sequence, read N- to C-terminus: S-adenosylmethionine:tRNA ribosyltransferase-isomerase (341 aa).

The protein belongs to the QueA family. In terms of assembly, monomer.

It is found in the cytoplasm. It catalyses the reaction 7-aminomethyl-7-carbaguanosine(34) in tRNA + S-adenosyl-L-methionine = epoxyqueuosine(34) in tRNA + adenine + L-methionine + 2 H(+). It functions in the pathway tRNA modification; tRNA-queuosine biosynthesis. Transfers and isomerizes the ribose moiety from AdoMet to the 7-aminomethyl group of 7-deazaguanine (preQ1-tRNA) to give epoxyqueuosine (oQ-tRNA). The sequence is that of S-adenosylmethionine:tRNA ribosyltransferase-isomerase from Herminiimonas arsenicoxydans.